Consider the following 375-residue polypeptide: Ribonuclease D (375 aa).

Residues 3-169 (YQMITTDDAL…LPITAKLMVE (167 aa)) enclose the 3'-5' exonuclease domain. The HRDC domain occupies 210-289 (RTRQLACLQL…EKAQTLPEDA (80 aa)).

The protein belongs to the RNase D family. The cofactor is a divalent metal cation.

The protein localises to the cytoplasm. The catalysed reaction is Exonucleolytic cleavage that removes extra residues from the 3'-terminus of tRNA to produce 5'-mononucleotides.. Exonuclease involved in the 3' processing of various precursor tRNAs. Initiates hydrolysis at the 3'-terminus of an RNA molecule and releases 5'-mononucleotides. The sequence is that of Ribonuclease D from Escherichia coli (strain K12).